The sequence spans 451 residues: Chromosomal replication initiator protein DnaA (451 aa).

The tract at residues M1–E93 is domain I, interacts with DnaA modulators. The tract at residues E88 to S108 is disordered. The interval Q94–T113 is domain II. The domain III, AAA+ region stretch occupies residues M114–S330. The ATP site is built by G158, G160, K161, and T162. A domain IV, binds dsDNA region spans residues S331–Q451.

This sequence belongs to the DnaA family. Oligomerizes as a right-handed, spiral filament on DNA at oriC.

It is found in the cytoplasm. In terms of biological role, plays an essential role in the initiation and regulation of chromosomal replication. ATP-DnaA binds to the origin of replication (oriC) to initiate formation of the DNA replication initiation complex once per cell cycle. Binds the DnaA box (a 9 base pair repeat at the origin) and separates the double-stranded (ds)DNA. Forms a right-handed helical filament on oriC DNA; dsDNA binds to the exterior of the filament while single-stranded (ss)DNA is stabiized in the filament's interior. The ATP-DnaA-oriC complex binds and stabilizes one strand of the AT-rich DNA unwinding element (DUE), permitting loading of DNA polymerase. After initiation quickly degrades to an ADP-DnaA complex that is not apt for DNA replication. Binds acidic phospholipids. The polypeptide is Chromosomal replication initiator protein DnaA (Shouchella clausii (strain KSM-K16) (Alkalihalobacillus clausii)).